Here is an 833-residue protein sequence, read N- to C-terminus: Prickle-like protein 1 (833 aa).

Residues 1-22 (MPLEMDQKISKHTFGCQRSSTS) are disordered. Residues 14–122 (FGCQRSSTSD…NIKMLSRAVM (109 aa)) enclose the PET domain. LIM zinc-binding domains are found at residues 124–188 (AMCE…ELLK), 189–249 (PRCS…HYAE), and 250–313 (YCES…EDVH). Disordered regions lie at residues 312 to 346 (VHAS…ADQC), 432 to 456 (EDNR…RNSR), 603 to 702 (CQEK…ERNP), 767 to 786 (CSSS…QPIP), and 805 to 833 (NALS…CIIS). Basic and acidic residues-rich tracts occupy residues 432-453 (EDNR…DLQR) and 603-614 (CQEKPPPEEKPM). The span at 669–680 (RPHHHRRRKSRK) shows a compositional bias: basic residues. The segment covering 817 to 833 (TKSKKKKGHKGKNCIIS) has biased composition (basic residues). The residue at position 830 (cysteine 830) is a Cysteine methyl ester. Cysteine 830 carries S-farnesyl cysteine lipidation. A propeptide spans 831 to 833 (IIS) (removed in mature form).

Belongs to the prickle / espinas / testin family. In terms of assembly, interacts with dvl2/dsh and mapk8/jnk1.

The protein resides in the cell membrane. Acts in a planar cell polarity (PCP) complex; polarization along the apical/basal axis of epithelial cells. Regulates the polarized assembly of fibronectrin on the surface of the mesoderm during gastrulation. Essential for gastrulation cell movements, cooperating with dvl2/dsh to activate jnk. Acts together with tes to control axial elongation. The chain is Prickle-like protein 1 from Xenopus tropicalis (Western clawed frog).